The sequence spans 322 residues: Olfactory receptor 5P2 (322 aa).

Residues 1–28 lie on the Extracellular side of the membrane; the sequence is MNSLKDGNHTALTGFILLGLTDDPILRV. N8 carries an N-linked (GlcNAc...) asparagine glycan. A helical membrane pass occupies residues 29–42; that stretch reads ILFMIILSGNLSII. At 43–50 the chain is on the cytoplasmic side; it reads ILIRISSQ. Residues 51–71 form a helical membrane-spanning segment; sequence LHHPMYFFLSHLAFADMAYSS. Over 72-95 the chain is Extracellular; it reads SVTPNMLVNFLVERNTVSYLGCAI. C93 and C185 are disulfide-bonded. A helical membrane pass occupies residues 96–116; that stretch reads QLGSAAFFATVECVLLAAMAY. At 117–135 the chain is on the cytoplasmic side; sequence DRFVAICSPLLYSTKMSTQ. Residues 136 to 156 traverse the membrane as a helical segment; the sequence is VSVQLLLVVYIAGFLIAVSYT. Residues 157–192 are Extracellular-facing; that stretch reads TSFYFLLFCGPNQVNHFFCDFAPLLELSCSDISVST. Residues 193–213 form a helical membrane-spanning segment; the sequence is VVLSFSSGSIIVVTVCVIAVC. Over 214 to 233 the chain is Cytoplasmic; that stretch reads YIYILITILKMRSTEGHHKA. The helical transmembrane segment at 234-254 threads the bilayer; the sequence is FSTCTSHLTVVTLFYGTITFI. Residues 255–267 lie on the Extracellular side of the membrane; it reads YVMPNFSYSTDQN. N-linked (GlcNAc...) asparagine glycosylation occurs at N259. The chain crosses the membrane as a helical span at residues 268–288; that stretch reads KVVSVLYTVVIPMLNPLIYSL. At 289–322 the chain is on the cytoplasmic side; it reads RNKEIKGALKRELVRKILSHDACYFSRTSNNDIT.

The protein belongs to the G-protein coupled receptor 1 family. In terms of tissue distribution, expressed in the tongue.

It is found in the cell membrane. Its function is as follows. Odorant receptor (Potential). May be involved in taste perception. The protein is Olfactory receptor 5P2 (OR5P2) of Homo sapiens (Human).